Consider the following 282-residue polypeptide: Acyl-CoA-binding domain-containing protein 6 (282 aa).

Residues 1 to 34 (MATPFLPAGATTGDSGGELSSGDDSGDLESFQTP) are disordered. A Phosphoserine modification is found at Ser-41. Positions 42 to 127 (LAELFEKAAA…VKKLDPGWNP (86 aa)) constitute an ACB domain. An acyl-CoA is bound by residues 69–73 (YARYK) and Lys-95. Ser-106 carries the post-translational modification Phosphoserine. Tyr-114 serves as a coordination point for an acyl-CoA. ANK repeat units follow at residues 191–220 (EGRALLHWACDRGHKELVKVLLQCEAGINC) and 224–253 (EGQTALHYAAACEFSDIVELLLQSGADPTL).

As to quaternary structure, monomer.

The protein localises to the cytoplasm. It is found in the nucleus. Functionally, binds long-chain acyl-coenzyme A molecules with a strong preference for unsaturated C18:1-CoA, lower affinity for unsaturated C20:4-CoA, and very weak affinity for saturated C16:0-CoA. Does not bind fatty acids. Plays a role in protein N-myristoylation. In Rattus norvegicus (Rat), this protein is Acyl-CoA-binding domain-containing protein 6 (Acbd6).